The primary structure comprises 327 residues: ATPase ASNA1 homolog (327 aa).

26 to 33 is a binding site for ATP; it reads KGGVGKTT. Aspartate 57 is a catalytic residue. Residues glutamate 238 and asparagine 265 each contribute to the ATP site. Zn(2+)-binding residues include cysteine 274 and cysteine 277.

The protein belongs to the arsA ATPase family. In terms of assembly, homodimer.

The protein resides in the cytoplasm. Its subcellular location is the endoplasmic reticulum. Its function is as follows. ATPase required for the post-translational delivery of tail-anchored (TA) proteins to the endoplasmic reticulum. Recognizes and selectively binds the transmembrane domain of TA proteins in the cytosol. This complex then targets to the endoplasmic reticulum by membrane-bound receptors, where the tail-anchored protein is released for insertion. This process is regulated by ATP binding and hydrolysis. ATP binding drives the homodimer towards the closed dimer state, facilitating recognition of newly synthesized TA membrane proteins. ATP hydrolysis is required for insertion. Subsequently, the homodimer reverts towards the open dimer state, lowering its affinity for the membrane-bound receptor, and returning it to the cytosol to initiate a new round of targeting. The chain is ATPase ASNA1 homolog from Entamoeba histolytica (strain ATCC 30459 / HM-1:IMSS / ABRM).